A 79-amino-acid chain; its full sequence is Putative antitoxin VapB12 (79 aa).

This sequence belongs to the UPF0330 family.

Functionally, possibly the antitoxin component of a type II toxin-antitoxin (TA) system. Its cognate toxin is VapC12 (Potential). This chain is Putative antitoxin VapB12 (vapB12), found in Sulfurisphaera tokodaii (strain DSM 16993 / JCM 10545 / NBRC 100140 / 7) (Sulfolobus tokodaii).